Here is a 202-residue protein sequence, read N- to C-terminus: ATP-dependent Clp protease proteolytic subunit (202 aa).

The active-site Nucleophile is the Ser98. The active site involves His123.

This sequence belongs to the peptidase S14 family. In terms of assembly, fourteen ClpP subunits assemble into 2 heptameric rings which stack back to back to give a disk-like structure with a central cavity, resembling the structure of eukaryotic proteasomes.

It is found in the cytoplasm. The catalysed reaction is Hydrolysis of proteins to small peptides in the presence of ATP and magnesium. alpha-casein is the usual test substrate. In the absence of ATP, only oligopeptides shorter than five residues are hydrolyzed (such as succinyl-Leu-Tyr-|-NHMec, and Leu-Tyr-Leu-|-Tyr-Trp, in which cleavage of the -Tyr-|-Leu- and -Tyr-|-Trp bonds also occurs).. Functionally, cleaves peptides in various proteins in a process that requires ATP hydrolysis. Has a chymotrypsin-like activity. Plays a major role in the degradation of misfolded proteins. The sequence is that of ATP-dependent Clp protease proteolytic subunit from Syntrophobacter fumaroxidans (strain DSM 10017 / MPOB).